We begin with the raw amino-acid sequence, 304 residues long: C-type lectin domain family 10 member A (304 aa).

The Cytoplasmic segment spans residues 1-35 (MIYENLQNSRIEEKTQEPGKAPSQSFLWRILSWTH). Residues 36–56 (LLLFSLGLSLLLLVVVSVIGS) form a helical; Signal-anchor for type II membrane protein membrane-spanning segment. Over 57 to 304 (QNSQLRRDLG…ICEMKLAKES (248 aa)) the chain is Extracellular. 2 N-linked (GlcNAc...) asparagine glycosylation sites follow: N74 and N166. The C-type lectin domain occupies 172–298 (CCPLHWTEHE…QRTFRWICEM (127 aa)). 3 disulfides stabilise this stretch: C173–C184, C201–C296, and C274–C288.

Homooligomer. Interacts with SIGLEC1, which may act as a counter-receptor for CLEC10A in lymph node. In terms of tissue distribution, detected in lymph node in the subcapsular sinus, interfollicular regions, T and B-cell boundary and in the areas surrounding high endothelial venules (at protein level). Expressed on the surface of activated macrophages. Expressed in heart, lung, testis, skeletal muscle, spleen, brain, kidney and thymus. Expressed in P388, RAW 264.7 and M1 cell lines.

Its subcellular location is the membrane. Functionally, recognizes terminal galactose and N-acetylgalactosamine units. May participate in the interaction between tumoricidal macrophages and tumor cells. Plays a role in the recruitment of inflammatory monocytes to adipose tissue in diet-induced obesity. The protein is C-type lectin domain family 10 member A (Clec10a) of Mus musculus (Mouse).